A 106-amino-acid chain; its full sequence is Large ribosomal subunit protein eL42 (106 aa).

The disordered stretch occupies residues 34–53 (YAQGKRRYDRKQSGYGGQTK).

This sequence belongs to the eukaryotic ribosomal protein eL42 family. In terms of assembly, component of the large ribosomal subunit.

Its subcellular location is the cytoplasm. In terms of biological role, component of the large ribosomal subunit. The ribosome is a large ribonucleoprotein complex responsible for the synthesis of proteins in the cell. This chain is Large ribosomal subunit protein eL42 (Rpl36a), found in Canis lupus familiaris (Dog).